A 214-amino-acid polypeptide reads, in one-letter code: U3 small nucleolar RNA-associated protein 16 (214 aa).

Over residues 1-10 (MSNGHVKFDA) the composition is skewed to basic and acidic residues. A disordered region spans residues 1–106 (MSNGHVKFDA…KSVNETEVTD (106 aa)). Serine 16 is subject to Phosphoserine. Residues 22-41 (DRQDDVLVISKKDKEVHSSS) are compositionally biased toward basic and acidic residues. Over residues 42 to 52 (DEESDDDDAPQ) the composition is skewed to acidic residues. 3 positions are modified to phosphoserine: serine 45, serine 65, and serine 144. The segment covering 54-75 (EGLHSGKSEVESQITQREEAIR) has biased composition (basic and acidic residues). Residues 182–214 (STTQDSKTLPPKKESSIIRSKDRWLNRKALNKG) form a disordered region. A compositionally biased stretch (basic and acidic residues) spans 192–206 (PKKESSIIRSKDRWL).

Belongs to the UTP16 family. Part of the small subunit (SSU) processome composed of at least 40 protein subunits and the RNA chaperone small nucleolar RNA (snoRNA) U3. Interacts with snoRNA U3. Interacts with MPP10.

It is found in the nucleus. The protein localises to the nucleolus. In terms of biological role, functions as part of the small subunit (SSU) processome, first precursor of the small eukaryotic ribosomal subunit that coordinates the first two steps of ribosome biogenesis in transcription of the primary transcript pre-RNA and pre-18S processing. During the assembly of the SSU processome in the nucleolus, many ribosome biogenesis factors, an RNA chaperone and ribosomal proteins associate with the nascent pre-rRNA and work in concert to generate RNA folding, modifications, rearrangements and cleavage as well as targeted degradation of pre-ribosomal RNA by the RNA exosome. Has a role in bud site selection maybe via the regulation of expression of bipolar budding components. The sequence is that of U3 small nucleolar RNA-associated protein 16 (BUD21) from Saccharomyces cerevisiae (strain ATCC 204508 / S288c) (Baker's yeast).